Here is a 51-residue protein sequence, read N- to C-terminus: Sec-independent protein translocase protein TatA (51 aa).

The helical transmembrane segment at 1-21 threads the bilayer; the sequence is MGMSFSHLLIILLIIFVLFGA.

The protein belongs to the TatA/E family. As to quaternary structure, the Tat system comprises two distinct complexes: a TatABC complex, containing multiple copies of TatA, TatB and TatC subunits, and a separate TatA complex, containing only TatA subunits. Substrates initially bind to the TatABC complex, which probably triggers association of the separate TatA complex to form the active translocon.

It localises to the cell inner membrane. Its function is as follows. Part of the twin-arginine translocation (Tat) system that transports large folded proteins containing a characteristic twin-arginine motif in their signal peptide across membranes. TatA could form the protein-conducting channel of the Tat system. In Rickettsia bellii (strain RML369-C), this protein is Sec-independent protein translocase protein TatA.